We begin with the raw amino-acid sequence, 347 residues long: MNPLTFAMILLTIMLGTTIVMTSSHWLVVWIGFEMNMLAVIPVLMKKYNPRSMEAATKYFLTQATASMLLMLAIVINLIYSGQWSTTNPLNPTASIIMTLALAMKLGLAPFHFWVPEVTQGIQLSSGLILLTWQKLAPISILYQISSTTNLNLLLAMSILSVAIGGWGGLNQTQLRKIMAYSSIAHMGWMTAIMVYNPTMALLNLVIYILLTTTTFSVFMLNSSTTTLSLSHMWNKTPLLTTALLMTMLSLGGLPPLSGFLPKWMIIQELTKNNSVIVPTTMAITALLNLYFYMRLTYSTSLTTFPSTNNMKIKWQLNNTKPTIHLSPLIILSTLILPLSPILTLLE.

The next 10 helical transmembrane spans lie at 1–21 (MNPLTFAMILLTIMLGTTIVM), 25–45 (HWLVVWIGFEMNMLAVIPVLM), 59–79 (YFLTQATASMLLMLAIVINLI), 96–116 (IIMTLALAMKLGLAPFHFWVP), 122–142 (IQLSSGLILLTWQKLAPISIL), 150–170 (NLNLLLAMSILSVAIGGWGGL), 201–221 (ALLNLVIYILLTTTTFSVFML), 242–262 (TALLMTMLSLGGLPPLSGFLP), 274–294 (NSVIVPTTMAITALLNLYFYM), and 326–346 (LSPLIILSTLILPLSPILTLL).

Belongs to the complex I subunit 2 family. Core subunit of respiratory chain NADH dehydrogenase (Complex I) which is composed of 45 different subunits. Interacts with TMEM242.

It is found in the mitochondrion inner membrane. The catalysed reaction is a ubiquinone + NADH + 5 H(+)(in) = a ubiquinol + NAD(+) + 4 H(+)(out). Functionally, core subunit of the mitochondrial membrane respiratory chain NADH dehydrogenase (Complex I) which catalyzes electron transfer from NADH through the respiratory chain, using ubiquinone as an electron acceptor. Essential for the catalytic activity and assembly of complex I. The protein is NADH-ubiquinone oxidoreductase chain 2 of Eidolon helvum (Straw-colored fruit bat).